The following is a 410-amino-acid chain: MENREVNWMKSGCKRRIELPEELLAEIVARLPFISITRFKSVCKGWRSLIESTYFRHLFVFAHRNSSSSWSLVCGTFGWSVEEMAGFYGCKRYGLPRRLGSYIPPHGLVDKHKIVACTDGLVLLQTVTKRETFSVGSPVLRQWVQLPPHPWKGISSSVLAIGLVTRVEDGVVMEYKVVCMDIDYRWEVESLILEIYSSLTGTWTRKKVRCPSLIVSLSYKRCLSLKKMLHWLDTHYRCRSSVGAIVAYDVYADDDEQQFRIIPFPDQKACFRRAYTTSGGFLVCINKIHLLLRLWRLEEYTSDSGRWQLTQEINLTSFGCDHHYFPVAMHPSETHITYMGNPEKALVSIDLKTHKLTLHTKSSAYRDTMVYHYLDTVYVSVEASFDHDVFYTPQFTLPTWMGSVPRSPSI.

The 46-residue stretch at 13–58 (CKRRIELPEELLAEIVARLPFISITRFKSVCKGWRSLIESTYFRHL) folds into the F-box domain. 2 Kelch repeats span residues 177 to 227 (VVCM…SLKK) and 274 to 327 (AYTT…YFPV).

This Arabidopsis thaliana (Mouse-ear cress) protein is Putative F-box/kelch-repeat protein At1g15680.